The primary structure comprises 942 residues: UvrABC system protein A (942 aa).

Glycine 32–serine 39 is an ATP binding site. The C4-type zinc-finger motif lies at cysteine 251–cysteine 278. ABC transporter domains are found at residues tryptophan 308–isoleucine 589 and glycine 609–lysine 937. Glycine 641 to serine 648 contacts ATP. A C4-type zinc finger spans residues cysteine 740–cysteine 766.

The protein belongs to the ABC transporter superfamily. UvrA family. As to quaternary structure, forms a heterotetramer with UvrB during the search for lesions.

The protein localises to the cytoplasm. In terms of biological role, the UvrABC repair system catalyzes the recognition and processing of DNA lesions. UvrA is an ATPase and a DNA-binding protein. A damage recognition complex composed of 2 UvrA and 2 UvrB subunits scans DNA for abnormalities. When the presence of a lesion has been verified by UvrB, the UvrA molecules dissociate. This Streptococcus pyogenes serotype M3 (strain ATCC BAA-595 / MGAS315) protein is UvrABC system protein A.